The sequence spans 232 residues: UPF0758 protein BH3032 (232 aa).

The MPN domain occupies 107 to 229 (VIRTPEDVSR…FVSLKEKGHL (123 aa)). Residues His178, His180, and Asp191 each coordinate Zn(2+). Positions 178–191 (HNHPSGDPTPSRED) match the JAMM motif motif.

The protein belongs to the UPF0758 family.

In Halalkalibacterium halodurans (strain ATCC BAA-125 / DSM 18197 / FERM 7344 / JCM 9153 / C-125) (Bacillus halodurans), this protein is UPF0758 protein BH3032.